Consider the following 122-residue polypeptide: MIQMQTNLDVADNSGARRVQCIKVLGGSKRKYASVGDIIVVSVKEAIPRGRVKKGDVRKAVVVRTAKEVRREDGTAIRFDRNAAVILNNNNEPVGTRIFGPVVRELRAKNFMKIISLAPEVL.

Belongs to the universal ribosomal protein uL14 family. As to quaternary structure, part of the 50S ribosomal subunit. Forms a cluster with proteins L3 and L19. In the 70S ribosome, L14 and L19 interact and together make contacts with the 16S rRNA in bridges B5 and B8.

Binds to 23S rRNA. Forms part of two intersubunit bridges in the 70S ribosome. The protein is Large ribosomal subunit protein uL14 of Ruegeria pomeroyi (strain ATCC 700808 / DSM 15171 / DSS-3) (Silicibacter pomeroyi).